We begin with the raw amino-acid sequence, 199 residues long: ATP synthase subunit a (199 aa).

6 consecutive transmembrane segments (helical) span residues 2–22, 25–45, 53–73, 80–100, 143–163, and 164–184; these read TNVYFLDIFMFVYVLQFLFYF, SMLGVLVNKFLGLLVVVFSYT, VISVFTFLVLLTCCFGGYFMY, MIEFTFVYAMVAWLSTLLTFI, VNVLVGHVISMMLYQLLELYL, and GIFYVWIVVLAIVMECFVFFI.

The protein belongs to the ATPase A chain family. As to quaternary structure, F-type ATPases have 2 components, CF(1) - the catalytic core - and CF(0) - the membrane proton channel. CF(1) has five subunits: alpha(3), beta(3), gamma(1), delta(1), epsilon(1). CF(0) has three main subunits: a, b and c.

It is found in the mitochondrion inner membrane. Mitochondrial membrane ATP synthase (F(1)F(0) ATP synthase or Complex V) produces ATP from ADP in the presence of a proton gradient across the membrane which is generated by electron transport complexes of the respiratory chain. F-type ATPases consist of two structural domains, F(1) - containing the extramembraneous catalytic core and F(0) - containing the membrane proton channel, linked together by a central stalk and a peripheral stalk. During catalysis, ATP synthesis in the catalytic domain of F(1) is coupled via a rotary mechanism of the central stalk subunits to proton translocation. Key component of the proton channel; it may play a direct role in the translocation of protons across the membrane. The protein is ATP synthase subunit a (ATP6) of Ascaris suum (Pig roundworm).